We begin with the raw amino-acid sequence, 617 residues long: Probable potassium transport system protein Kup 3 (617 aa).

The next 11 helical transmembrane spans lie at 42–62 (VASL…ALLI), 95–115 (LVVG…TPAI), 129–149 (PSLA…LFMM), 160–180 (IFGP…IHGI), 206–226 (VSFA…AMYA), 240–260 (WFAI…ALLI), 282–302 (LVAF…SGVF), 330–350 (IYVP…VLSF), 360–380 (YGIA…LVAI), 386–406 (PWLV…FFSA), and 411–431 (LFEG…MMLT).

This sequence belongs to the HAK/KUP transporter (TC 2.A.72) family.

It localises to the cell inner membrane. It carries out the reaction K(+)(in) + H(+)(in) = K(+)(out) + H(+)(out). Functionally, transport of potassium into the cell. Likely operates as a K(+):H(+) symporter. The sequence is that of Probable potassium transport system protein Kup 3 from Bradyrhizobium diazoefficiens (strain JCM 10833 / BCRC 13528 / IAM 13628 / NBRC 14792 / USDA 110).